The primary structure comprises 157 residues: Crossover junction endodeoxyribonuclease RuvC (157 aa).

Catalysis depends on residues Asp7, Glu70, and Asp142. Mg(2+) is bound by residues Asp7, Glu70, and Asp142.

This sequence belongs to the RuvC family. As to quaternary structure, homodimer which binds Holliday junction (HJ) DNA. The HJ becomes 2-fold symmetrical on binding to RuvC with unstacked arms; it has a different conformation from HJ DNA in complex with RuvA. In the full resolvosome a probable DNA-RuvA(4)-RuvB(12)-RuvC(2) complex forms which resolves the HJ. Mg(2+) is required as a cofactor.

The protein resides in the cytoplasm. The enzyme catalyses Endonucleolytic cleavage at a junction such as a reciprocal single-stranded crossover between two homologous DNA duplexes (Holliday junction).. In terms of biological role, the RuvA-RuvB-RuvC complex processes Holliday junction (HJ) DNA during genetic recombination and DNA repair. Endonuclease that resolves HJ intermediates. Cleaves cruciform DNA by making single-stranded nicks across the HJ at symmetrical positions within the homologous arms, yielding a 5'-phosphate and a 3'-hydroxyl group; requires a central core of homology in the junction. The consensus cleavage sequence is 5'-(A/T)TT(C/G)-3'. Cleavage occurs on the 3'-side of the TT dinucleotide at the point of strand exchange. HJ branch migration catalyzed by RuvA-RuvB allows RuvC to scan DNA until it finds its consensus sequence, where it cleaves and resolves the cruciform DNA. The polypeptide is Crossover junction endodeoxyribonuclease RuvC (Synechococcus sp. (strain RCC307)).